The primary structure comprises 263 residues: MPLPVALQTRLAKRGILKHLEPEPEEEIIAEDYDDDPVDYEATRIEGLPPSWYKVFDPSCGLPYYWNVETDLVSWLSPHDPNFVVTKSAKKVRNNNADAEDKSDRNLEKVDRNHEKSDRSHEKPDRSHEKADRNHEKNDRERERNYDKVDRERDRDRERERAFDKADREEGKDRRHHRREELAPYPKNKKATSRKDEELDPMDPSSYSDAPRGTWSTGLPKRNEAKTGADTTAAGPLFQQRPYPSPGAVLRANAEASRTKQQD.

Positions 46–80 constitute a WW domain; sequence EGLPPSWYKVFDPSCGLPYYWNVETDLVSWLSPHD. Residues 94-263 are disordered; sequence NNNADAEDKS…AEASRTKQQD (170 aa). Over residues 99-173 the composition is skewed to basic and acidic residues; sequence AEDKSDRNLE…DKADREEGKD (75 aa). One copy of the 1-1; approximate repeat lies at 104-110; it reads DRNLEKV. The tract at residues 104–138 is 5 X 7 AA approximate tandem repeats of D-R-[NS]-H-E-K-S; it reads DRNLEKVDRNHEKSDRSHEKPDRSHEKADRNHEKN. A 1-2 repeat occupies 111 to 117; sequence DRNHEKS. The stretch at 118–124 is one 1-3; approximate repeat; the sequence is DRSHEKP. Residues 125–131 form a 1-4; approximate repeat; sequence DRSHEKA. Residues 132 to 138 form a 1-5; approximate repeat; the sequence is DRNHEKN. 9 repeat units span residues 139 to 140, 141 to 142, 143 to 144, 150 to 151, 152 to 153, 154 to 155, 156 to 157, 158 to 159, and 160 to 161. The 3 X 2 AA tandem repeats of [DE]-R stretch occupies residues 139 to 144; that stretch reads DRERER. A 6 X 2 AA tandem repeats of [DE]-R region spans residues 150–161; that stretch reads DRERDRDRERER. The important for interaction with TXNL4A stretch occupies residues 243–253; the sequence is YPSPGAVLRAN. Position 245 is a phosphoserine (serine 245).

Interacts with POU3F2/Brn-2, ATXN1, TXNL4A, HTT and AR. Interaction with ATXN1 correlates positively with the length of the polyglutamine tract. Interacts with RNA polymerase II large subunit in a phosphorylation-dependent manner. Forms a ternary complex with ATXN1 mutant and phosphorylated RNA polymerase II. Interacts (via C-terminus) with TXNL4A and CD2BP2. Interacts (via WW domain) with ATN1 and SF3B1, and may interact with additional splice factors. Interacts (via WW domain) with WBP11; Leading to reduce interaction between PQBP1 and TXNL4A. Interacts with CAPRIN1. Interacts with DDX1. Interacts with SFPQ. Interacts with KHSRP. As to expression, detected in brain cortex and hippocampus neurons (at protein level). Expressed in brain with high level in cerebellar cortex, hippocampus and olfactory bulb.

Its subcellular location is the nucleus. It localises to the nucleus speckle. The protein resides in the cytoplasmic granule. Functionally, intrinsically disordered protein that acts as a scaffold, and which is involved in different processes, such as pre-mRNA splicing, transcription regulation, innate immunity and neuron development. Interacts with splicing-related factors via the intrinsically disordered region and regulates alternative splicing of target pre-mRNA species. May suppress the ability of POU3F2 to transactivate the DRD1 gene in a POU3F2 dependent manner. Can activate transcription directly or via association with the transcription machinery. May be involved in ATXN1 mutant-induced cell death. The interaction with ATXN1 mutant reduces levels of phosphorylated RNA polymerase II large subunit. Involved in the assembly of cytoplasmic stress granule, possibly by participating in the transport of neuronal RNA granules. Also acts as an innate immune sensor of infection by retroviruses, by detecting the presence of reverse-transcribed DNA in the cytosol. Directly binds retroviral reverse-transcribed DNA in the cytosol and interacts with CGAS, leading to activate the cGAS-STING signaling pathway, triggering type-I interferon production. The polypeptide is Polyglutamine-binding protein 1 (Pqbp1) (Mus musculus (Mouse)).